A 536-amino-acid polypeptide reads, in one-letter code: Membrane protein insertase YidC (536 aa).

A helical transmembrane segment spans residues 5–25; that stretch reads ALIAVILSIVFFYGYSALFPP. Residues 30–54 form a disordered region; the sequence is APAPSAQQAVTGSQPGAPQASVAAV. The span at 31–54 shows a compositional bias: low complexity; sequence PAPSAQQAVTGSQPGAPQASVAAV. Transmembrane regions (helical) follow at residues 350–370, 420–440, 454–474, and 494–514; these read YGIAIIIITVILKIIFYPLTH, LPMLVQIPVFFALYKALMFSI, LAGKDPYYVTPIIMGITMVIQ, and PVVFTFMFLNFPSGLVLYWLV.

It belongs to the OXA1/ALB3/YidC family. Type 1 subfamily. As to quaternary structure, interacts with the Sec translocase complex via SecD. Specifically interacts with transmembrane segments of nascent integral membrane proteins during membrane integration.

It is found in the cell inner membrane. Its function is as follows. Required for the insertion and/or proper folding and/or complex formation of integral membrane proteins into the membrane. Involved in integration of membrane proteins that insert both dependently and independently of the Sec translocase complex, as well as at least some lipoproteins. Aids folding of multispanning membrane proteins. This is Membrane protein insertase YidC from Geobacter metallireducens (strain ATCC 53774 / DSM 7210 / GS-15).